A 196-amino-acid polypeptide reads, in one-letter code: dCTP deaminase (196 aa).

Residues 113–118 (RSSLAR), Asp-131, 139–141 (VLE), Tyr-174, Lys-181, and Gln-185 each bind dCTP. Glu-141 acts as the Proton donor/acceptor in catalysis.

The protein belongs to the dCTP deaminase family. As to quaternary structure, homotrimer.

It catalyses the reaction dCTP + H2O + H(+) = dUTP + NH4(+). It functions in the pathway pyrimidine metabolism; dUMP biosynthesis; dUMP from dCTP (dUTP route): step 1/2. Catalyzes the deamination of dCTP to dUTP. This chain is dCTP deaminase, found in Wigglesworthia glossinidia brevipalpis.